The sequence spans 67 residues: Cold shock protein ScoF (67 aa).

One can recognise a CSD domain in the interval 4 to 64; that stretch reads GTVKWFNSEK…GQKGPQAENI (61 aa).

The protein resides in the cytoplasm. The chain is Cold shock protein ScoF (scoF) from Streptomyces coelicolor (strain ATCC BAA-471 / A3(2) / M145).